We begin with the raw amino-acid sequence, 407 residues long: Ribonuclease Z (407 aa).

Positions 1-308 (MEITFLGTSS…QDFLHYAIPR (308 aa)) are ribonuclease Z. Residues His-62, His-64, Asp-66, His-67, His-139, Asp-210, and His-268 each coordinate Zn(2+). Asp-66 functions as the Proton acceptor in the catalytic mechanism. Residues 309–407 (DGQICAEMPP…VDWSALNVLF (99 aa)) are unknown.

This sequence belongs to the RNase Z family. In terms of assembly, homodimer. It depends on Zn(2+) as a cofactor.

It carries out the reaction Endonucleolytic cleavage of RNA, removing extra 3' nucleotides from tRNA precursor, generating 3' termini of tRNAs. A 3'-hydroxy group is left at the tRNA terminus and a 5'-phosphoryl group is left at the trailer molecule.. In terms of biological role, zinc phosphodiesterase, which displays some tRNA 3'-processing endonuclease activity. Probably involved in tRNA maturation, by removing a 3'-trailer from precursor tRNA. This is Ribonuclease Z (rnz) from Thermosynechococcus vestitus (strain NIES-2133 / IAM M-273 / BP-1).